A 131-amino-acid chain; its full sequence is Ribonuclease P protein component (131 aa).

The protein belongs to the RnpA family. As to quaternary structure, consists of a catalytic RNA component (M1 or rnpB) and a protein subunit.

It catalyses the reaction Endonucleolytic cleavage of RNA, removing 5'-extranucleotides from tRNA precursor.. Functionally, RNaseP catalyzes the removal of the 5'-leader sequence from pre-tRNA to produce the mature 5'-terminus. It can also cleave other RNA substrates such as 4.5S RNA. The protein component plays an auxiliary but essential role in vivo by binding to the 5'-leader sequence and broadening the substrate specificity of the ribozyme. This is Ribonuclease P protein component from Synechococcus sp. (strain WH7803).